Here is a 427-residue protein sequence, read N- to C-terminus: Serine--tRNA ligase (427 aa).

231–233 (TAE) serves as a coordination point for L-serine. 262–264 (RSE) lines the ATP pocket. Glutamate 285 is a binding site for L-serine. 349–352 (EISS) contacts ATP. An L-serine-binding site is contributed by serine 385.

Belongs to the class-II aminoacyl-tRNA synthetase family. Type-1 seryl-tRNA synthetase subfamily. Homodimer. The tRNA molecule binds across the dimer.

It is found in the cytoplasm. The enzyme catalyses tRNA(Ser) + L-serine + ATP = L-seryl-tRNA(Ser) + AMP + diphosphate + H(+). The catalysed reaction is tRNA(Sec) + L-serine + ATP = L-seryl-tRNA(Sec) + AMP + diphosphate + H(+). It functions in the pathway aminoacyl-tRNA biosynthesis; selenocysteinyl-tRNA(Sec) biosynthesis; L-seryl-tRNA(Sec) from L-serine and tRNA(Sec): step 1/1. Its function is as follows. Catalyzes the attachment of serine to tRNA(Ser). Is also able to aminoacylate tRNA(Sec) with serine, to form the misacylated tRNA L-seryl-tRNA(Sec), which will be further converted into selenocysteinyl-tRNA(Sec). The protein is Serine--tRNA ligase of Listeria welshimeri serovar 6b (strain ATCC 35897 / DSM 20650 / CCUG 15529 / CIP 8149 / NCTC 11857 / SLCC 5334 / V8).